A 292-amino-acid chain; its full sequence is ATP synthase gamma chain (292 aa).

It belongs to the ATPase gamma chain family. As to quaternary structure, F-type ATPases have 2 components, CF(1) - the catalytic core - and CF(0) - the membrane proton channel. CF(1) has five subunits: alpha(3), beta(3), gamma(1), delta(1), epsilon(1). CF(0) has three main subunits: a, b and c.

Its subcellular location is the cell membrane. Its function is as follows. Produces ATP from ADP in the presence of a proton gradient across the membrane. The gamma chain is believed to be important in regulating ATPase activity and the flow of protons through the CF(0) complex. The protein is ATP synthase gamma chain of Streptococcus pneumoniae serotype 2 (strain D39 / NCTC 7466).